A 263-amino-acid polypeptide reads, in one-letter code: Probable WRKY transcription factor 62 (263 aa).

Residues 59–104 are disordered; it reads DHQDDQSNNSSPQDSSPVLESSRKPLHKRGRKTSMAESSDYHRHES. Positions 64–74 are enriched in low complexity; sequence QSNNSSPQDSS. The segment at residues 104 to 174 is a DNA-binding region (WRKY); that stretch reads SSTPIYHDGF…GQHICQLHQA (71 aa).

It belongs to the WRKY group III family.

It is found in the nucleus. In terms of biological role, transcription factor. Interacts specifically with the W box (5'-(T)TGAC[CT]-3'), a frequently occurring elicitor-responsive cis-acting element. The chain is Probable WRKY transcription factor 62 (WRKY62) from Arabidopsis thaliana (Mouse-ear cress).